The chain runs to 435 residues: Homoserine dehydrogenase (435 aa).

Residues Thr13, Val14, and Lys104 each coordinate NADPH. Val14 provides a ligand contact to NAD(+). Residues Val14 and Lys104 each contribute to the NADP(+) site. The Na(+) site is built by Glu128, Val131, Gly133, and Ile135. Residues Gly186 and Glu189 each contribute to the NADP(+) site. Glu189 and Asp200 together coordinate L-homoserine. The active-site Proton donor is Lys204. Gly301 contributes to the NADPH binding site. Residue Gly301 participates in NAD(+) binding. Residue Gly301 coordinates NADP(+). Positions 354 to 429 constitute an ACT domain; sequence YLRVQAKDEP…CVEKPITMIR (76 aa).

This sequence belongs to the homoserine dehydrogenase family. In terms of assembly, homotetramer. Requires a metal cation as cofactor.

It carries out the reaction L-homoserine + NAD(+) = L-aspartate 4-semialdehyde + NADH + H(+). The protein operates within amino-acid biosynthesis; L-methionine biosynthesis via de novo pathway; L-homoserine from L-aspartate: step 3/3. It functions in the pathway amino-acid biosynthesis; L-threonine biosynthesis; L-threonine from L-aspartate: step 3/5. Neither NaCl nor KCl increase the activity. L-threonine and L-serine do not markedly inhibit the oxidation activity. Catalyzes the conversion of L-aspartate-beta-semialdehyde (L-Asa) to L-homoserine (L-Hse), the third step in the biosynthesis of threonine and methionine from aspartate. Is highly specific for NAD(+), and displays an approximate 479-fold (kcat/Km) preference for NAD(+) over NADP(+). The polypeptide is Homoserine dehydrogenase (Neisseria gonorrhoeae (strain ATCC 700825 / FA 1090)).